The sequence spans 567 residues: Synaptotagmin-like protein 1 (567 aa).

The RabBD domain maps to 31–87 (LLDLSFLTEEEQEAISDVLKRDAHLRQLEEGRVSKLRASLEDPWQLKILTGDWFQEA). Residues 103–255 (RASIRRKKSP…VSSLNSSTLS (153 aa)) are disordered. Ser-120 carries the post-translational modification Phosphoserine. Composition is skewed to acidic residues over residues 122–135 (GEAE…IEGE) and 170–184 (GQEE…ELEA). Over residues 208 to 219 (ESQPTPAQSKAT) the composition is skewed to polar residues. At Ser-220 the chain carries Phosphoserine. Over residues 235 to 255 (SLDRMLSSSSSVSSLNSSTLS) the composition is skewed to low complexity. 2 C2 domains span residues 271 to 390 (VRGS…WLPL) and 403 to 532 (SRGL…VPWM).

Monomer. Binds NCF2 and NRXN1. Binds RAB27A that has been activated by GTP-binding via its N-terminus. As to expression, highly expressed in lung. Detected at lower levels in spleen, liver and kidney, and at very low levels in heart, brain and skeletal muscle. Expressed in cytotoxic T-lymphocytes (CTL).

Its subcellular location is the endomembrane system. It localises to the cell membrane. Binds phosphatidylinositol 3,4,5-trisphosphate. May play a role in vesicle trafficking. Acts as a RAB27A effector protein and may play a role in cytotoxic granule exocytosis in lymphocytes. This Mus musculus (Mouse) protein is Synaptotagmin-like protein 1 (Sytl1).